Reading from the N-terminus, the 174-residue chain is Shikimate kinase (174 aa).

15-20 contacts ATP; it reads GTGKST. Residue S19 coordinates Mg(2+). Residues D37, R61, and G82 each contribute to the substrate site. Residue R120 coordinates ATP. R138 serves as a coordination point for substrate.

It belongs to the shikimate kinase family. In terms of assembly, monomer. The cofactor is Mg(2+).

The protein resides in the cytoplasm. It carries out the reaction shikimate + ATP = 3-phosphoshikimate + ADP + H(+). The protein operates within metabolic intermediate biosynthesis; chorismate biosynthesis; chorismate from D-erythrose 4-phosphate and phosphoenolpyruvate: step 5/7. Its function is as follows. Catalyzes the specific phosphorylation of the 3-hydroxyl group of shikimic acid using ATP as a cosubstrate. The sequence is that of Shikimate kinase from Staphylococcus aureus (strain NCTC 8325 / PS 47).